The following is a 378-amino-acid chain: UPF0754 membrane protein Bcer98_0694 (378 aa).

A helical membrane pass occupies residues 358 to 378; that stretch reads LGALLGGTIGLMQGILLLFLM.

The protein belongs to the UPF0754 family.

The protein resides in the cell membrane. The chain is UPF0754 membrane protein Bcer98_0694 from Bacillus cytotoxicus (strain DSM 22905 / CIP 110041 / 391-98 / NVH 391-98).